Here is a 306-residue protein sequence, read N- to C-terminus: ATP-dependent (S)-NAD(P)H-hydrate dehydratase (306 aa).

A YjeF C-terminal domain is found at L4 to L300. Residues G104 and N157–S163 contribute to the (6S)-NADPHX site. ATP contacts are provided by residues K197–D201 and G216–G225. (6S)-NADPHX is bound at residue D226.

It belongs to the NnrD/CARKD family. It depends on Mg(2+) as a cofactor.

The catalysed reaction is (6S)-NADHX + ATP = ADP + phosphate + NADH + H(+). It catalyses the reaction (6S)-NADPHX + ATP = ADP + phosphate + NADPH + H(+). Functionally, catalyzes the dehydration of the S-form of NAD(P)HX at the expense of ATP, which is converted to ADP. Together with NAD(P)HX epimerase, which catalyzes the epimerization of the S- and R-forms, the enzyme allows the repair of both epimers of NAD(P)HX, a damaged form of NAD(P)H that is a result of enzymatic or heat-dependent hydration. This is ATP-dependent (S)-NAD(P)H-hydrate dehydratase from Dictyostelium discoideum (Social amoeba).